The chain runs to 142 residues: Large ribosomal subunit protein uL11 (142 aa).

Belongs to the universal ribosomal protein uL11 family. Part of the ribosomal stalk of the 50S ribosomal subunit. Interacts with L10 and the large rRNA to form the base of the stalk. L10 forms an elongated spine to which L12 dimers bind in a sequential fashion forming a multimeric L10(L12)X complex. One or more lysine residues are methylated.

In terms of biological role, forms part of the ribosomal stalk which helps the ribosome interact with GTP-bound translation factors. The sequence is that of Large ribosomal subunit protein uL11 from Vibrio campbellii (strain ATCC BAA-1116).